A 239-amino-acid chain; its full sequence is Transcriptional regulatory protein BtsR (239 aa).

Positions 3–116 (KVLIVDDEPL…RLEKTLHRLR (114 aa)) constitute a Response regulatory domain. The residue at position 54 (aspartate 54) is a 4-aspartylphosphate. The HTH LytTR-type domain maps to 137-239 (IPCTGHSRIY…LKSLKEAIGL (103 aa)).

Phosphorylated by BtsS.

Member of the two-component regulatory system BtsS/BtsR. BtsR regulates expression of btsT by binding to its promoter region. This is Transcriptional regulatory protein BtsR from Salmonella typhi.